The sequence spans 340 residues: DNA-directed RNA polymerase subunit alpha (340 aa).

Residues 1–233 are alpha N-terminal domain (alpha-NTD); sequence MYKNWRDLIR…EQLSIFINFD (233 aa). Positions 246 to 340 are alpha C-terminal domain (alpha-CTD); it reads DEIDKINENL…RLRGEQNEEE (95 aa).

This sequence belongs to the RNA polymerase alpha chain family. Homodimer. The RNAP catalytic core consists of 2 alpha, 1 beta, 1 beta' and 1 omega subunit. When a sigma factor is associated with the core the holoenzyme is formed, which can initiate transcription.

It catalyses the reaction RNA(n) + a ribonucleoside 5'-triphosphate = RNA(n+1) + diphosphate. DNA-dependent RNA polymerase catalyzes the transcription of DNA into RNA using the four ribonucleoside triphosphates as substrates. In Pelobacter propionicus (strain DSM 2379 / NBRC 103807 / OttBd1), this protein is DNA-directed RNA polymerase subunit alpha.